Reading from the N-terminus, the 164-residue chain is Large ribosomal subunit protein bL17 (164 aa).

The segment at 127 to 164 (RARTDSVPARKGAGKKDASRVSGTVPDGQSQKIGKKKE) is disordered.

Belongs to the bacterial ribosomal protein bL17 family. As to quaternary structure, part of the 50S ribosomal subunit. Contacts protein L32.

This Treponema pallidum (strain Nichols) protein is Large ribosomal subunit protein bL17.